Reading from the N-terminus, the 1595-residue chain is Pentafunctional AROM polypeptide (1595 aa).

The interval 1–384 is 3-dehydroquinate synthase; sequence MGVPTKISIL…HEPRASTVSN (384 aa). NAD(+) contacts are provided by residues 44-46, 81-84, 114-116, and Asp-119; these read DTN, ESSK, and GGV. Arg-130 contacts 7-phospho-2-dehydro-3-deoxy-D-arabino-heptonate. An NAD(+)-binding site is contributed by 139–140; sequence TT. Positions 146 and 152 each coordinate 7-phospho-2-dehydro-3-deoxy-D-arabino-heptonate. Lys-161 contributes to the NAD(+) binding site. Asn-162 is a binding site for 7-phospho-2-dehydro-3-deoxy-D-arabino-heptonate. Residues 179–182 and Asn-190 each bind NAD(+); that span reads FLNT. Zn(2+) is bound at residue Glu-194. Residues 194–197 and Lys-250 contribute to the 7-phospho-2-dehydro-3-deoxy-D-arabino-heptonate site; that span reads EVIK. Residue Glu-260 is the Proton acceptor; for 3-dehydroquinate synthase activity of the active site. 7-phospho-2-dehydro-3-deoxy-D-arabino-heptonate contacts are provided by residues 264–268 and His-271; that span reads RNLLN. His-271 provides a ligand contact to Zn(2+). His-275 (proton acceptor; for 3-dehydroquinate synthase activity) is an active-site residue. 7-phospho-2-dehydro-3-deoxy-D-arabino-heptonate-binding residues include His-287 and Lys-356. His-287 contributes to the Zn(2+) binding site. Positions 397–842 are EPSP synthase; that stretch reads VSPGVPKGLD…WDSLAQTFKV (446 aa). The active-site For EPSP synthase activity is Cys-824. The segment at 866-1057 is shikimate kinase; that stretch reads ASIFIIGMRG…RRKENTFFVS (192 aa). 872–879 is a binding site for ATP; sequence GMRGAGKT. Residues 1058–1278 form a 3-dehydroquinase region; that stretch reads LTLPDLSLAA…AAPGQLSARE (221 aa). The active-site Proton acceptor; for 3-dehydroquinate dehydratase activity is the His-1181. Lys-1209 serves as the catalytic Schiff-base intermediate with substrate; for 3-dehydroquinate dehydratase activity. The interval 1291-1595 is shikimate dehydrogenase; sequence AKKFAVIGNP…MGVSPSEDIL (305 aa).

This sequence in the N-terminal section; belongs to the sugar phosphate cyclases superfamily. Dehydroquinate synthase family. In the 2nd section; belongs to the EPSP synthase family. The protein in the 3rd section; belongs to the shikimate kinase family. It in the 4th section; belongs to the type-I 3-dehydroquinase family. This sequence in the C-terminal section; belongs to the shikimate dehydrogenase family. In terms of assembly, homodimer. Zn(2+) serves as cofactor.

The protein resides in the cytoplasm. The catalysed reaction is 7-phospho-2-dehydro-3-deoxy-D-arabino-heptonate = 3-dehydroquinate + phosphate. It carries out the reaction 3-dehydroquinate = 3-dehydroshikimate + H2O. The enzyme catalyses shikimate + NADP(+) = 3-dehydroshikimate + NADPH + H(+). It catalyses the reaction shikimate + ATP = 3-phosphoshikimate + ADP + H(+). The catalysed reaction is 3-phosphoshikimate + phosphoenolpyruvate = 5-O-(1-carboxyvinyl)-3-phosphoshikimate + phosphate. Its pathway is metabolic intermediate biosynthesis; chorismate biosynthesis; chorismate from D-erythrose 4-phosphate and phosphoenolpyruvate: step 2/7. The protein operates within metabolic intermediate biosynthesis; chorismate biosynthesis; chorismate from D-erythrose 4-phosphate and phosphoenolpyruvate: step 3/7. It participates in metabolic intermediate biosynthesis; chorismate biosynthesis; chorismate from D-erythrose 4-phosphate and phosphoenolpyruvate: step 4/7. It functions in the pathway metabolic intermediate biosynthesis; chorismate biosynthesis; chorismate from D-erythrose 4-phosphate and phosphoenolpyruvate: step 5/7. Its pathway is metabolic intermediate biosynthesis; chorismate biosynthesis; chorismate from D-erythrose 4-phosphate and phosphoenolpyruvate: step 6/7. The AROM polypeptide catalyzes 5 consecutive enzymatic reactions in prechorismate polyaromatic amino acid biosynthesis. The polypeptide is Pentafunctional AROM polypeptide (Ajellomyces capsulatus (strain G186AR / H82 / ATCC MYA-2454 / RMSCC 2432) (Darling's disease fungus)).